The primary structure comprises 648 residues: RAF proto-oncogene serine/threonine-protein kinase (648 aa).

Phosphoserine; by MAPK1 is present on serine 29. Position 43 is a phosphoserine; by PKA and MAPK1 (serine 43). Residues 56-131 (NTIRVFLPNK…IGEELQVDFL (76 aa)) enclose the RBD domain. A Phorbol-ester/DAG-type zinc finger spans residues 138–184 (THNFARKTFLKLAFCDICQKFLLNGFRCQTCGYKFHEHCSTKVPTMC). Histidine 139, cysteine 152, cysteine 155, cysteine 165, cysteine 168, histidine 173, cysteine 176, and cysteine 184 together coordinate Zn(2+). The disordered stretch occupies residues 205–265 (GVPAPPSFPM…RSTSTPNVHM (61 aa)). Phosphoserine; by PKA is present on serine 233. Residues 239 to 265 (TFNTSSPSSEGSLSQRQRSTSTPNVHM) show a composition bias toward polar residues. Serine 252 is modified (phosphoserine). A Phosphoserine; by PKA, PKC and PKB/AKT1 modification is found at serine 259. Threonine 268 carries the post-translational modification Phosphothreonine; by autocatalysis. Threonine 269 carries the post-translational modification Phosphothreonine; by PKA. Positions 281–335 (IRSHSESASPSALSSSPNNLSPTGWSQPKTPVPAQRERAPGSGTQEKNKIRPRGQ) are disordered. Positions 286-301 (ESASPSALSSSPNNLS) are enriched in low complexity. Phosphoserine; by MAPK1 occurs at positions 289, 296, and 301. Residues 331–349 (RPRGQRDSSYYWEIEASEV) form an interaction with PEBP1/RKIP region. Serine 338 is subject to Phosphoserine; by PAK1, PAK2, PAK3 and PAK5. At serine 339 the chain carries Phosphoserine; by PAK1, PAK2 and PAK3. A phosphotyrosine; by SRC mark is found at tyrosine 340 and tyrosine 341. One can recognise a Protein kinase domain in the interval 349–609 (VMLSTRIGSG…PQILSSIELL (261 aa)). Residues 355–363 (IGSGSFGTV) and lysine 375 each bind ATP. Aspartate 468 acts as the Proton acceptor in catalysis. Serine 471 carries the phosphoserine modification. Threonine 491 carries the post-translational modification Phosphothreonine. Phosphoserine is present on serine 494. Serine 497 and serine 499 each carry phosphoserine; by PKC. At arginine 563 the chain carries Symmetric dimethylarginine; by PRMT5. Serine 621 carries the phosphoserine modification. Residue serine 642 is modified to Phosphoserine; by MAPK1.

It belongs to the protein kinase superfamily. TKL Ser/Thr protein kinase family. RAF subfamily. In terms of assembly, monomer. Homodimer. Heterodimerizes with BRAF and this heterodimer possesses a highly increased kinase activity compared to the respective homodimers or monomers. Heterodimerization is mitogen-regulated and enhanced by 14-3-3 proteins. MAPK1/ERK2 activation can induce a negative feedback that promotes the dissociation of the heterodimer. Forms a multiprotein complex with Ras (M-Ras/MRAS), SHOC2 and protein phosphatase 1 (PPP1CA, PPP1CB and PPP1CC). Interacts with LZTR1. Interacts with Ras proteins; the interaction is antagonized by RIN1. Weakly interacts with RIT1. Interacts (via N-terminus) with RGS14 (via RBD domains); the interaction mediates the formation of a ternary complex with BRAF, a ternary complex inhibited by GNAI1. Probably forms a complex composed of chaperones HSP90 and HSP70, co-chaperones CDC37, PPP5C, TSC1 and client protein TSC2, CDK4, AKT, RAF1 and NR3C1; this complex does not contain co-chaperones STIP1/HOP and PTGES3/p23. Interacts with STK3/MST2; the interaction inhibits its pro-apoptotic activity. Interacts (when phosphorylated at Ser-259) with YWHAZ (unphosphorylated at 'Thr-232'). Interacts with MAP2K1/MEK1 and MAP2K2/MEK2. Interacts with MAP3K5/ASF1 (via N-terminus) and this interaction inhibits the proapoptotic function of MAP3K5/ASK1. Interacts with PAK1 (via kinase domain). The Ser-338 and Ser-339 phosphorylated form (by PAK1) interacts with BCL2. Interacts with PEBP1/RKIP and this interaction is enhanced if RAF1 is phosphorylated on residues Ser-338, Ser-339, Tyr-340 and Tyr-341. Interacts with ADCY2, ADCY5, ADCY6, DGKH, RCAN1/DSCR1, PPP1R12A, PKB/AKT1, SPRY2, SPRY4, CNKSR1/CNK1, KSR2 and PHB/prohibitin. The phosphorylated form interacts with PIN1. Interacts with PPP2CA, PPP2R1B and ROCK2. In its active form, interacts with PRMT5. Interacts with FAM83B; displaces 14-3-3 proteins from RAF1 and activates RAF1. Interacts with PDE8A; the interaction promotes RAF1 activity. Interacts with MFHAS1. Interacts with GLS. Interacts with NEK10 and MAP2K1; the interaction is direct with NEK10 and required for ERK1/2-signaling pathway activation in response to UV irradiation. It depends on Zn(2+) as a cofactor. Post-translationally, phosphorylation at Thr-269, Ser-338, Tyr-341, Thr-491 and Ser-494 results in its activation. Phosphorylation at Ser-29, Ser-43, Ser-289, Ser-296, Ser-301 and Ser-642 by MAPK1/ERK2 results in its inactivation. Phosphorylation at Ser-259 induces the interaction with YWHAZ and inactivates kinase activity. Dephosphorylation of Ser-259 by the SHOC2-MRAS-PP1c (SMP) complex consisting of SHOC2, GTP-bound M-Ras/MRAS and the catalytic subunit of protein phosphatase 1 (PPP1CA, PPP1CB or PPP1CC); this relieves inactivation and stimulates kinase activity. Phosphorylation at Ser-338 by PAK1 and PAK5 and Ser-339 by PAK1 is required for its mitochondrial localization. Phosphorylation at Ser-621 in response to growth factor treatment stabilizes the protein, possibly by preventing proteasomal degradation. Phosphorylation at Ser-289, Ser-296, Ser-301, Ser-338 and Ser-621 are somehow linked to the methylation potential of cells. Treatment of cells with HGF in the presence of the methylation inhibitor 5'-methylthioadenosine (MTA) results in increased phosphorylation at Ser-338 and Ser-621 and decreased phosphorylation at Ser-296, Ser-301 and Ser-338. Dephosphorylation at Ser-338 by PPP5C results in a decreased of activity. In terms of processing, methylated at Arg-563 in response to EGF treatment. This modification leads to destabilization of the protein, possibly through proteasomal degradation. In terms of tissue distribution, present in all tissues tested: testis, ovary, small intestine, colon, peripheral blood leukocytes, fetal liver, bone marrow, thymus, lymph node and spleen, and the cell lines melanoma G-361, lung carcinoma A-549, colorectal adenocarcinoma SW480, Burkitt's lymphoma Raji and lymphoblastic leukemia MOLT-4. In skeletal muscle, isoform 1 is more abundant than isoform 2.

It localises to the cytoplasm. It is found in the cell membrane. The protein resides in the mitochondrion. The protein localises to the nucleus. The catalysed reaction is L-seryl-[protein] + ATP = O-phospho-L-seryl-[protein] + ADP + H(+). The enzyme catalyses L-threonyl-[protein] + ATP = O-phospho-L-threonyl-[protein] + ADP + H(+). Regulation is a highly complex process involving membrane recruitment, protein-protein interactions, dimerization, and phosphorylation/dephosphorylation events. Ras-GTP recruits RAF1 to the membrane, thereby promoting its activation. The inactive conformation of RAF1 is maintained by autoinhibitory interactions occurring between the N-terminal regulatory and the C-terminal catalytic domains and by the binding of a 14-3-3 protein that contacts two phosphorylation sites, Ser-259 and Ser-621. Upon mitogenic stimulation, Ras and PPP2R1A cooperate to release autoinhibition and the subsequent phosphorylation of activating sites: Ser-338, Tyr-341, Thr-491, and Ser-494, yields a fully active kinase. Through a negative feedback mechanism involving MAPK1/ERK2, RAF1 is phosphorylated on Ser-29, Ser-43, Ser-289, Ser-296, Ser-301 and Ser-642 by MAPK1/ERK2, which yields an inactive, desensitized kinase. The signaling-competent conformation of RAF1 is finally re-established by the coordinated action of PIN1, a prolyl isomerase that converts pSer and pThr residues from the cis to the trans conformation, which is preferentially recognized and dephosphorylated by PPP2R1A. Activated by homodimerization and heterodimerization (with BRAF). Also regulated through association with other proteins such as KSR2, CNKSR1/CNK1, PEBP1/RKIP, PHB/prohibitin and SPRY4. PEBP1/RKIP acts by dissociating RAF1 from its substrates MAP2K1/MEK1 and MAP2K2/MEK2. PHB/prohibitin facilitates the displacement of 14-3-3 from RAF1 by activated Ras, thereby promoting cell membrane localization and phosphorylation of RAF1 at the activating Ser-338. SPRY4 inhibits Ras-independent, but not Ras-dependent, activation of RAF1. CNKSR1/CNK1 regulates Src-mediated RAF1 activation. Its function is as follows. Serine/threonine-protein kinase that acts as a regulatory link between the membrane-associated Ras GTPases and the MAPK/ERK cascade, and this critical regulatory link functions as a switch determining cell fate decisions including proliferation, differentiation, apoptosis, survival and oncogenic transformation. RAF1 activation initiates a mitogen-activated protein kinase (MAPK) cascade that comprises a sequential phosphorylation of the dual-specific MAPK kinases (MAP2K1/MEK1 and MAP2K2/MEK2) and the extracellular signal-regulated kinases (MAPK3/ERK1 and MAPK1/ERK2). The phosphorylated form of RAF1 (on residues Ser-338 and Ser-339, by PAK1) phosphorylates BAD/Bcl2-antagonist of cell death at 'Ser-75'. Phosphorylates adenylyl cyclases: ADCY2, ADCY5 and ADCY6, resulting in their activation. Phosphorylates PPP1R12A resulting in inhibition of the phosphatase activity. Phosphorylates TNNT2/cardiac muscle troponin T. Can promote NF-kB activation and inhibit signal transducers involved in motility (ROCK2), apoptosis (MAP3K5/ASK1 and STK3/MST2), proliferation and angiogenesis (RB1). Can protect cells from apoptosis also by translocating to the mitochondria where it binds BCL2 and displaces BAD/Bcl2-antagonist of cell death. Plays a role in the oncogenic transformation of epithelial cells via repression of the TJ protein, occludin (OCLN) by inducing the up-regulation of a transcriptional repressor SNAI2/SLUG, which induces down-regulation of OCLN. Restricts caspase activation in response to selected stimuli, notably Fas stimulation, pathogen-mediated macrophage apoptosis, and erythroid differentiation. Regulates Rho signaling and migration, and is required for normal wound healing. This Mus musculus (Mouse) protein is RAF proto-oncogene serine/threonine-protein kinase (Raf1).